The sequence spans 97 residues: Glutamyl-tRNA(Gln) amidotransferase subunit C (97 aa).

This sequence belongs to the GatC family. As to quaternary structure, heterotrimer of A, B and C subunits.

The catalysed reaction is L-glutamyl-tRNA(Gln) + L-glutamine + ATP + H2O = L-glutaminyl-tRNA(Gln) + L-glutamate + ADP + phosphate + H(+). The enzyme catalyses L-aspartyl-tRNA(Asn) + L-glutamine + ATP + H2O = L-asparaginyl-tRNA(Asn) + L-glutamate + ADP + phosphate + 2 H(+). In terms of biological role, allows the formation of correctly charged Asn-tRNA(Asn) or Gln-tRNA(Gln) through the transamidation of misacylated Asp-tRNA(Asn) or Glu-tRNA(Gln) in organisms which lack either or both of asparaginyl-tRNA or glutaminyl-tRNA synthetases. The reaction takes place in the presence of glutamine and ATP through an activated phospho-Asp-tRNA(Asn) or phospho-Glu-tRNA(Gln). This is Glutamyl-tRNA(Gln) amidotransferase subunit C from Sulfurisphaera tokodaii (strain DSM 16993 / JCM 10545 / NBRC 100140 / 7) (Sulfolobus tokodaii).